The primary structure comprises 594 residues: Elongation factor 4 (594 aa).

The region spanning 2-184 (KNIRNFSIIA…TIVAKVPAPE (183 aa)) is the tr-type G domain. GTP is bound by residues 14–19 (DHGKST) and 131–134 (NKID).

It belongs to the TRAFAC class translation factor GTPase superfamily. Classic translation factor GTPase family. LepA subfamily.

It localises to the cell inner membrane. The enzyme catalyses GTP + H2O = GDP + phosphate + H(+). Functionally, required for accurate and efficient protein synthesis under certain stress conditions. May act as a fidelity factor of the translation reaction, by catalyzing a one-codon backward translocation of tRNAs on improperly translocated ribosomes. Back-translocation proceeds from a post-translocation (POST) complex to a pre-translocation (PRE) complex, thus giving elongation factor G a second chance to translocate the tRNAs correctly. Binds to ribosomes in a GTP-dependent manner. This chain is Elongation factor 4, found in Francisella tularensis subsp. novicida (strain U112).